A 340-amino-acid chain; its full sequence is GTPase Obg (340 aa).

One can recognise an Obg domain in the interval 1–158; it reads MSFIDEAKIY…KHIILKLKII (158 aa). The OBG-type G domain maps to 159-325; sequence SDVGIIGLPN…LSTLIKQIHK (167 aa). GTP is bound by residues 165-172, 190-194, 211-214, 278-281, and 306-308; these read GLPNAGKS, FTTLE, DIPG, NKSD, and SSI. Residues Ser172 and Thr192 each coordinate Mg(2+).

Belongs to the TRAFAC class OBG-HflX-like GTPase superfamily. OBG GTPase family. As to quaternary structure, monomer. The cofactor is Mg(2+).

The protein localises to the cytoplasm. In terms of biological role, an essential GTPase which binds GTP, GDP and possibly (p)ppGpp with moderate affinity, with high nucleotide exchange rates and a fairly low GTP hydrolysis rate. Plays a role in control of the cell cycle, stress response, ribosome biogenesis and in those bacteria that undergo differentiation, in morphogenesis control. This chain is GTPase Obg, found in Ehrlichia canis (strain Jake).